Reading from the N-terminus, the 49-residue chain is uncharacterized protein (49 aa).

This is an uncharacterized protein from Sinorhizobium fredii (strain NBRC 101917 / NGR234).